The following is a 206-amino-acid chain: Max dimerization protein 3 (206 aa).

Residues 8-25 (IQVLLQAAEFLERREREA) are interaction with SIN3A and SIN3B. Disordered regions lie at residues 29–66 (YASLCPHHSPGTVCRRRKPPLQAPGALNSGRSVHNELE) and 122–171 (KLRS…QEDL). The bHLH domain maps to 57 to 109 (SGRSVHNELEKRRRAQLKRCLEQLRQQMPLGVDCTRYTTLSLLRRARVHIQKL). A compositionally biased stretch (low complexity) spans 126-138 (KQQSLQQQLEQLQ). Over residues 143 to 153 (ARERERLRADS) the composition is skewed to basic and acidic residues.

Efficient DNA binding requires dimerization with another bHLH protein. Binds DNA as a heterodimer with MAX. Interacts with SIN3A AND SIN3B. Interacts with RNF17. As to expression, expressed only in the proliferating areas of the testis and thymus.

The protein localises to the nucleus. Transcriptional repressor. Binds with MAX to form a sequence-specific DNA-binding protein complex which recognizes the core sequence 5'-CAC[GA]TG-3'. Antagonizes MYC transcriptional activity by competing for MAX and suppresses MYC dependent cell transformation. In Mus musculus (Mouse), this protein is Max dimerization protein 3 (Mxd3).